The primary structure comprises 433 residues: MLDIQLLRKDLDGVAKRLADRGYTLDVAAFSALEAERRAIQTRTEELQARRNSLSKQIGAMKGKGEDTSAVMAEVGGIGDEMKASEAKLGEIQTRLSDLMLGMPNIAHESVPVGKDEADNVEVRRWGTPREFDFAVKDHVDVGTPLGLDFETGAKLAGARFTMLRGSIARLHRALAQFMIDTHTLQHGYTETYTPYIVNPEILYGTGQLPKFADDMFRVEKGGGENTITQYLISTSEISLTNTVRESIVEGSALPIKLTAHSPCFRSEAGSYGRDTRGMIRQHQFDKVEMVQVVAPDASYAALDEMVGHAEAILQKLGLPYRVVALCTGDMGFSAAKTFDLEVWLPAQNTYREISSCSNTEAFQARRMQARFRNAQGKPELVHTLNGSGLAVGRTLVAVLENYQNADGSVTVPEALRPYMGGMERIDAPAQVS.

235–237 (TSE) is a binding site for L-serine. 266–268 (RSE) provides a ligand contact to ATP. Residue Glu-289 coordinates L-serine. An ATP-binding site is contributed by 353 to 356 (EISS). An L-serine-binding site is contributed by Ser-388.

The protein belongs to the class-II aminoacyl-tRNA synthetase family. Type-1 seryl-tRNA synthetase subfamily. Homodimer. The tRNA molecule binds across the dimer.

It localises to the cytoplasm. The enzyme catalyses tRNA(Ser) + L-serine + ATP = L-seryl-tRNA(Ser) + AMP + diphosphate + H(+). It catalyses the reaction tRNA(Sec) + L-serine + ATP = L-seryl-tRNA(Sec) + AMP + diphosphate + H(+). It participates in aminoacyl-tRNA biosynthesis; selenocysteinyl-tRNA(Sec) biosynthesis; L-seryl-tRNA(Sec) from L-serine and tRNA(Sec): step 1/1. Functionally, catalyzes the attachment of serine to tRNA(Ser). Is also able to aminoacylate tRNA(Sec) with serine, to form the misacylated tRNA L-seryl-tRNA(Sec), which will be further converted into selenocysteinyl-tRNA(Sec). The protein is Serine--tRNA ligase of Burkholderia ambifaria (strain ATCC BAA-244 / DSM 16087 / CCUG 44356 / LMG 19182 / AMMD) (Burkholderia cepacia (strain AMMD)).